A 494-amino-acid chain; its full sequence is UDP-N-acetylmuramoyl-L-alanyl-D-glutamate--2,6-diaminopimelate ligase (494 aa).

Ser-30 contacts UDP-N-acetyl-alpha-D-muramoyl-L-alanyl-D-glutamate. 110–116 contacts ATP; it reads GTNGKTS. UDP-N-acetyl-alpha-D-muramoyl-L-alanyl-D-glutamate is bound by residues 152-153, Ser-179, and Arg-187; that span reads TT. Lys-219 is modified (N6-carboxylysine). Residues Arg-380, 404-407, Gly-456, and Glu-460 contribute to the meso-2,6-diaminopimelate site; that span reads DNPR. The short motif at 404-407 is the Meso-diaminopimelate recognition motif element; that stretch reads DNPR.

The protein belongs to the MurCDEF family. MurE subfamily. Mg(2+) is required as a cofactor. Carboxylation is probably crucial for Mg(2+) binding and, consequently, for the gamma-phosphate positioning of ATP.

It is found in the cytoplasm. It catalyses the reaction UDP-N-acetyl-alpha-D-muramoyl-L-alanyl-D-glutamate + meso-2,6-diaminopimelate + ATP = UDP-N-acetyl-alpha-D-muramoyl-L-alanyl-gamma-D-glutamyl-meso-2,6-diaminopimelate + ADP + phosphate + H(+). The protein operates within cell wall biogenesis; peptidoglycan biosynthesis. Catalyzes the addition of meso-diaminopimelic acid to the nucleotide precursor UDP-N-acetylmuramoyl-L-alanyl-D-glutamate (UMAG) in the biosynthesis of bacterial cell-wall peptidoglycan. The sequence is that of UDP-N-acetylmuramoyl-L-alanyl-D-glutamate--2,6-diaminopimelate ligase from Alkaliphilus metalliredigens (strain QYMF).